The following is a 247-amino-acid chain: Caffeoyl-CoA O-methyltransferase 2 (247 aa).

A substrate-binding site is contributed by Lys21. Residues Thr63, Glu85, 87–88 (GV), Ser93, Asp111, and Ala140 each bind S-adenosyl-L-methionine. Asp163 is a binding site for substrate. Asp163 lines the a divalent metal cation pocket. Asp165 lines the S-adenosyl-L-methionine pocket. 2 residues coordinate a divalent metal cation: Asp189 and Asn190. Residue Asn194 participates in substrate binding.

Belongs to the class I-like SAM-binding methyltransferase superfamily. Cation-dependent O-methyltransferase family. CCoAMT subfamily. A divalent metal cation serves as cofactor.

It catalyses the reaction (E)-caffeoyl-CoA + S-adenosyl-L-methionine = (E)-feruloyl-CoA + S-adenosyl-L-homocysteine + H(+). It functions in the pathway aromatic compound metabolism; phenylpropanoid biosynthesis. In terms of biological role, methylates caffeoyl-CoA to feruloyl-CoA and 5-hydroxyferuloyl-CoA to sinapoyl-CoA. Plays a role in the synthesis of feruloylated polysaccharides. Involved in the reinforcement of the plant cell wall. Also involved in the responding to wounding or pathogen challenge by the increased formation of cell wall-bound ferulic acid polymers. The chain is Caffeoyl-CoA O-methyltransferase 2 (CCOAOMT2) from Eucalyptus globulus (Tasmanian blue gum).